We begin with the raw amino-acid sequence, 320 residues long: MQTRNTFSWIREEITRSISVSLMIYIITWASISSAYPIFAQQNYENPREATGRIVCANCHLANKPVDIEVPQTVLPDTVFEAVVKIPYDMQLKQVLANGKKGALNVGAVLILPEGFELAPPDRISPEMKEKIGNLSFQNYRPNKKNILVIGPVPGQKYSEITFPILAPDPASNKDVHFLKYPIYVGGNRGRGQIYPDGSKSNNTVYNATAGGIISKILRKEKGGYEITIVDASNGRQVIDIIPRGLELLVSEGESIKLDQPLTSNPNVGGFGQGDAEIVLQDPLRVQGLLFFLGSVVLAQIFLVLKKKQFEKVQLSEMNF.

An N-terminal signal peptide occupies residues 1–35 (MQTRNTFSWIREEITRSISVSLMIYIITWASISSA). The heme site is built by Y36, C56, C59, and H60. The chain crosses the membrane as a helical span at residues 286–306 (VQGLLFFLGSVVLAQIFLVLK).

This sequence belongs to the cytochrome f family. The 4 large subunits of the cytochrome b6-f complex are cytochrome b6, subunit IV (17 kDa polypeptide, petD), cytochrome f and the Rieske protein, while the 4 small subunits are PetG, PetL, PetM and PetN. The complex functions as a dimer. Heme serves as cofactor.

It is found in the plastid. Its subcellular location is the chloroplast thylakoid membrane. Functionally, component of the cytochrome b6-f complex, which mediates electron transfer between photosystem II (PSII) and photosystem I (PSI), cyclic electron flow around PSI, and state transitions. The protein is Cytochrome f of Barbarea verna (Land cress).